Consider the following 109-residue polypeptide: uncharacterized protein (109 aa).

This sequence belongs to the archaeal ATPase family.

This is an uncharacterized protein from Methanocaldococcus jannaschii (strain ATCC 43067 / DSM 2661 / JAL-1 / JCM 10045 / NBRC 100440) (Methanococcus jannaschii).